We begin with the raw amino-acid sequence, 273 residues long: NAD-dependent protein deacylase (273 aa).

The Deacetylase sirtuin-type domain occupies 1 to 269 (MNLDNAIHEA…PRIVEQVKKI (269 aa)). NAD(+)-binding positions include 25–44 (GAGV…GGVW) and 107–110 (QNID). The active-site Proton acceptor is the H125. The Zn(2+) site is built by C133, C136, C173, and C176. NAD(+) is bound by residues 211–213 (GTS), 237–239 (NPN), and T255.

It belongs to the sirtuin family. Class III subfamily. Zn(2+) serves as cofactor.

It is found in the cytoplasm. It carries out the reaction N(6)-acetyl-L-lysyl-[protein] + NAD(+) + H2O = 2''-O-acetyl-ADP-D-ribose + nicotinamide + L-lysyl-[protein]. In terms of biological role, NAD-dependent protein deacetylase which modulates the activities of several proteins which are inactive in their acetylated form. The polypeptide is NAD-dependent protein deacylase (cobB) (Desulfosudis oleivorans (strain DSM 6200 / JCM 39069 / Hxd3) (Desulfococcus oleovorans)).